Consider the following 268-residue polypeptide: MILPTNFFVTTIILLFILIFLASAIKIVKEYERAVIFRLGRVVGARGPGLFFIIPIFEKAVIVDLRTQVLDVPVQETITKDNVPVRVNAVVYFRVVDPVKAVTQVKNYIMATSQISQTTLRSVIGQAHLDELLSERDKLNMQLQRIIDEATDPWGIKVTAVEIKDVELPAGMQRAMAKQAEAERERRARITLAEAERQAAEKLREAAEIISEHPMALQLRTLQTISDVASDKSNVIVLMLPMEMLKLFKSLSDAAQVYAKKEKEKEKE.

A helical membrane pass occupies residues 1–21 (MILPTNFFVTTIILLFILIFL). Coiled-coil stretches lie at residues 125 to 152 (GQAH…EATD) and 178 to 213 (KQAE…ISEH).

Belongs to the band 7/mec-2 family. As to quaternary structure, homotrimer.

The protein resides in the membrane. The polypeptide is Stomatin homolog PYRAB06580 (Pyrococcus abyssi (strain GE5 / Orsay)).